We begin with the raw amino-acid sequence, 239 residues long: ATP synthase subunit a (239 aa).

A run of 6 helical transmembrane segments spans residues 31–51, 91–111, 125–145, 151–171, 194–214, and 215–235; these read FLLQ…LGLG, VFPL…LGMI, AACA…FHGV, FMGP…IGHI, ILFF…LGLF, and TGFI…AGAI.

It belongs to the ATPase A chain family. As to quaternary structure, F-type ATPases have 2 components, CF(1) - the catalytic core - and CF(0) - the membrane proton channel. CF(1) has five subunits: alpha(3), beta(3), gamma(1), delta(1), epsilon(1). CF(0) has three main subunits: a(1), b(2) and c(9-12). The alpha and beta chains form an alternating ring which encloses part of the gamma chain. CF(1) is attached to CF(0) by a central stalk formed by the gamma and epsilon chains, while a peripheral stalk is formed by the delta and b chains.

Its subcellular location is the cell inner membrane. Key component of the proton channel; it plays a direct role in the translocation of protons across the membrane. This Syntrophobacter fumaroxidans (strain DSM 10017 / MPOB) protein is ATP synthase subunit a.